A 428-amino-acid chain; its full sequence is Peptidase B (428 aa).

Mn(2+)-binding residues include Lys195 and Asp200. The active site involves Lys207. Mn(2+)-binding residues include Asp218, Asp277, and Glu279. Arg281 is an active-site residue.

Belongs to the peptidase M17 family. In terms of assembly, homohexamer. Mn(2+) is required as a cofactor.

Its subcellular location is the cytoplasm. The catalysed reaction is Release of an N-terminal amino acid, Xaa, from a peptide or arylamide. Xaa is preferably Glu or Asp but may be other amino acids, including Leu, Met, His, Cys and Gln.. Functionally, probably plays an important role in intracellular peptide degradation. The chain is Peptidase B from Klebsiella pneumoniae (strain 342).